Here is a 421-residue protein sequence, read N- to C-terminus: 3-phosphoshikimate 1-carboxyvinyltransferase (421 aa).

3-phosphoshikimate contacts are provided by Lys-21, Ser-22, and Arg-26. Lys-21 lines the phosphoenolpyruvate pocket. Phosphoenolpyruvate-binding residues include Gly-93 and Arg-121. Residues Ser-166, Ser-167, Gln-168, Ser-194, Asp-310, and Lys-337 each coordinate 3-phosphoshikimate. Position 168 (Gln-168) interacts with phosphoenolpyruvate. Residue Asp-310 is the Proton acceptor of the active site. Phosphoenolpyruvate contacts are provided by Arg-341, Arg-382, and Lys-407.

This sequence belongs to the EPSP synthase family. Monomer.

The protein localises to the cytoplasm. It carries out the reaction 3-phosphoshikimate + phosphoenolpyruvate = 5-O-(1-carboxyvinyl)-3-phosphoshikimate + phosphate. Its pathway is metabolic intermediate biosynthesis; chorismate biosynthesis. Catalyzes the transfer of the enolpyruvyl moiety of phosphoenolpyruvate (PEP) to the 5-hydroxyl of shikimate-3-phosphate (S3P) to produce enolpyruvyl shikimate-3-phosphate and inorganic phosphate. The chain is 3-phosphoshikimate 1-carboxyvinyltransferase from Methanoregula boonei (strain DSM 21154 / JCM 14090 / 6A8).